Reading from the N-terminus, the 102-residue chain is Secretoglobin family 1D member (102 aa).

The first 21 residues, 1–21 (MRLSVTALLVTLALCYYEANA), serve as a signal peptide directing secretion. Asparagine 87 carries N-linked (GlcNAc...) asparagine glycosylation.

The protein belongs to the secretoglobin family. Lipophilin subfamily.

It localises to the secreted. In terms of biological role, may bind androgens and other steroids. May be under transcriptional regulation of steroid hormones. The chain is Secretoglobin family 1D member (SCGB1D) from Bos taurus (Bovine).